The chain runs to 170 residues: AP-5 complex subunit sigma-1 (170 aa).

Probably part of the adaptor protein complex 5 (AP-5) a tetramer composed of AP5B1, AP5M1, AP5S1 and AP5Z1. Interacts with ZFYVE26 and SPG11.

It is found in the cytoplasm. The protein resides in the cytosol. Its subcellular location is the late endosome membrane. It localises to the lysosome membrane. Functionally, as part of AP-5, a probable fifth adaptor protein complex it may be involved in endosomal transport. This Mus musculus (Mouse) protein is AP-5 complex subunit sigma-1 (Ap5s1).